We begin with the raw amino-acid sequence, 126 residues long: Class I hydrophobin 1 (126 aa).

The signal sequence occupies residues 1–16 (MQYMTIVAFLAATVAA). Intrachain disulfides connect C38–C100, C46–C94, C47–C75, and C101–C119.

This sequence belongs to the fungal hydrophobin family.

The protein resides in the secreted. Its subcellular location is the cell wall. Functionally, aerial growth, conidiation, and dispersal of filamentous fungi in the environment rely upon a capability of their secreting small amphipathic proteins called hydrophobins (HPBs) with low sequence identity. Class I can self-assemble into an outermost layer of rodlet bundles on aerial cell surfaces, conferring cellular hydrophobicity that supports fungal growth, development and dispersal; whereas Class II form highly ordered films at water-air interfaces through intermolecular interactions but contribute nothing to the rodlet structure. HYD1 and HYD2 are required for the structural integrity of the long aerial chains of microconidia. Does not seem to be important for the ability to cause seedling disease. The polypeptide is Class I hydrophobin 1 (Gibberella moniliformis (Maize ear and stalk rot fungus)).